The following is a 545-amino-acid chain: Chaperonin GroEL (545 aa).

ATP contacts are provided by residues 30 to 33 (TLGP), Lys-51, 87 to 91 (DGTTT), Gly-415, 483 to 485 (NAA), and Asp-499.

It belongs to the chaperonin (HSP60) family. In terms of assembly, forms a cylinder of 14 subunits composed of two heptameric rings stacked back-to-back. Interacts with the co-chaperonin GroES.

The protein localises to the cytoplasm. It catalyses the reaction ATP + H2O + a folded polypeptide = ADP + phosphate + an unfolded polypeptide.. In terms of biological role, together with its co-chaperonin GroES, plays an essential role in assisting protein folding. The GroEL-GroES system forms a nano-cage that allows encapsulation of the non-native substrate proteins and provides a physical environment optimized to promote and accelerate protein folding. The protein is Chaperonin GroEL of Aquifex aeolicus (strain VF5).